We begin with the raw amino-acid sequence, 136 residues long: Small ribosomal subunit protein eS17B (136 aa).

This sequence belongs to the eukaryotic ribosomal protein eS17 family. As to quaternary structure, component of the small ribosomal subunit (SSU). Mature yeast ribosomes consist of a small (40S) and a large (60S) subunit. The 40S small subunit contains 1 molecule of ribosomal RNA (18S rRNA) and 33 different proteins (encoded by 57 genes). The large 60S subunit contains 3 rRNA molecules (25S, 5.8S and 5S rRNA) and 46 different proteins (encoded by 81 genes).

The protein resides in the cytoplasm. In terms of biological role, component of the ribosome, a large ribonucleoprotein complex responsible for the synthesis of proteins in the cell. The small ribosomal subunit (SSU) binds messenger RNAs (mRNAs) and translates the encoded message by selecting cognate aminoacyl-transfer RNA (tRNA) molecules. The large subunit (LSU) contains the ribosomal catalytic site termed the peptidyl transferase center (PTC), which catalyzes the formation of peptide bonds, thereby polymerizing the amino acids delivered by tRNAs into a polypeptide chain. The nascent polypeptides leave the ribosome through a tunnel in the LSU and interact with protein factors that function in enzymatic processing, targeting, and the membrane insertion of nascent chains at the exit of the ribosomal tunnel. The sequence is that of Small ribosomal subunit protein eS17B from Saccharomyces cerevisiae (strain ATCC 204508 / S288c) (Baker's yeast).